A 106-amino-acid chain; its full sequence is L-rhamnose mutarotase (106 aa).

Y20 contacts substrate. The active-site Proton donor is H24. Residues Y43 and 78–79 contribute to the substrate site; that span reads WW.

This sequence belongs to the rhamnose mutarotase family. In terms of assembly, homodimer.

The protein resides in the cytoplasm. The catalysed reaction is alpha-L-rhamnose = beta-L-rhamnose. It functions in the pathway carbohydrate metabolism; L-rhamnose metabolism. In terms of biological role, involved in the anomeric conversion of L-rhamnose. The chain is L-rhamnose mutarotase from Leptothrix cholodnii (strain ATCC 51168 / LMG 8142 / SP-6) (Leptothrix discophora (strain SP-6)).